The chain runs to 81 residues: Photosystem I iron-sulfur center (81 aa).

2 consecutive 4Fe-4S ferredoxin-type domains span residues 2–31 (SHTV…MIPW) and 39–68 (IASS…VRVY). Residues Cys11, Cys14, Cys17, Cys21, Cys48, Cys51, Cys54, and Cys58 each contribute to the [4Fe-4S] cluster site.

In terms of assembly, the eukaryotic PSI reaction center is composed of at least 11 subunits. The cofactor is [4Fe-4S] cluster.

The protein resides in the plastid. It localises to the chloroplast thylakoid membrane. The catalysed reaction is reduced [plastocyanin] + hnu + oxidized [2Fe-2S]-[ferredoxin] = oxidized [plastocyanin] + reduced [2Fe-2S]-[ferredoxin]. Functionally, apoprotein for the two 4Fe-4S centers FA and FB of photosystem I (PSI); essential for photochemical activity. FB is the terminal electron acceptor of PSI, donating electrons to ferredoxin. The C-terminus interacts with PsaA/B/D and helps assemble the protein into the PSI complex. Required for binding of PsaD and PsaE to PSI. PSI is a plastocyanin-ferredoxin oxidoreductase, converting photonic excitation into a charge separation, which transfers an electron from the donor P700 chlorophyll pair to the spectroscopically characterized acceptors A0, A1, FX, FA and FB in turn. The sequence is that of Photosystem I iron-sulfur center from Chaetosphaeridium globosum (Charophycean green alga).